The primary structure comprises 583 residues: Glucosidase 2 subunit beta (583 aa).

A signal peptide spans 1-26 (MVRLNLAVVALAAGALSASASASSSA). A disulfide bridge connects residues cysteine 91 and cysteine 115. Residues 130–252 (NRCEKVGKEY…LTLLLDDLAK (123 aa)) are a coiled coil. Positions 455 to 562 (NKCFSKDMGE…KVATPAVCFP (108 aa)) constitute an MRH domain. Cystine bridges form between cysteine 457/cysteine 470, cysteine 519/cysteine 548, and cysteine 533/cysteine 560. Residues 580–583 (KDEL) carry the Prevents secretion from ER motif.

As to quaternary structure, heterodimer of a catalytic subunit alpha and a subunit beta.

The protein localises to the endoplasmic reticulum. Functionally, subunit of glucosidase 2, which cleaves sequentially the 2 innermost alpha-1,3-linked glucose residues from the Glc(2)Man(9)GlcNAc(2) oligosaccharide precursor of immature glycoproteins in the endoplasmic reticulum (ER). Specifically required for the cleavage of the final glucose. The subunit beta retains the catalytic subunit alpha in the ER. The chain is Glucosidase 2 subunit beta from Mycosarcoma maydis (Corn smut fungus).